A 261-amino-acid chain; its full sequence is UPF0246 protein PMI0005 (261 aa).

The protein belongs to the UPF0246 family.

The sequence is that of UPF0246 protein PMI0005 from Proteus mirabilis (strain HI4320).